The chain runs to 363 residues: Flagellar P-ring protein 2 (363 aa).

The N-terminal stretch at 1-20 (MKRIVLLLMSVALFSTAAQA) is a signal peptide.

Belongs to the FlgI family. The basal body constitutes a major portion of the flagellar organelle and consists of four rings (L,P,S, and M) mounted on a central rod.

It is found in the periplasm. The protein resides in the bacterial flagellum basal body. Functionally, assembles around the rod to form the L-ring and probably protects the motor/basal body from shearing forces during rotation. In Vibrio parahaemolyticus serotype O3:K6 (strain RIMD 2210633), this protein is Flagellar P-ring protein 2 (flgI2).